The following is a 459-amino-acid chain: Prenyltransferase penI (459 aa).

Residues 107 to 108 (VV) and Glu111 contribute to the L-tryptophan site. 5 residues coordinate substrate: Arg126, Arg276, Lys278, Tyr280, and Tyr384.

It belongs to the tryptophan dimethylallyltransferase family.

The catalysed reaction is quinolinone B + dimethylallyl diphosphate = peniprequinolone + diphosphate. Its pathway is secondary metabolite biosynthesis. It functions in the pathway alkaloid biosynthesis. It participates in mycotoxin biosynthesis. Its function is as follows. Prenyltransferase; part of the gene cluster that mediates the biosynthesis of penigequinolones, potent insecticidal alkaloids that contain a highly modified 10-carbon prenyl group. The first stage is catalyzed by the nonribosomal peptide synthetase penN that condenses anthranilic acid and O-methyl-L-tyrosine to produce 4'-methoxycyclopeptin. 4'-methoxycyclopeptin is then converted to 4'-methoxydehydrocyclopeptin by the ketoglutarate-dependent dioxygenase penM through dehydrogenation to form a double bond between C-alpha and C-beta of the O-methyltyrosine side chain. PenM also converts its first product methoxydehydrocyclopeptin to 4'-methoxycyclopenin. The following conversion of 4'methoxycyclopenin into 4'-methoxyviridicatin is catalyzed by the cyclopenase penL. 4'-methoxyviridicatin is the precursor of quinolone natural products, and is further converted to quinolinone B. The prenyltransferase penI then catalyzes the canonical Friedel-Crafts alkylation of quinolinone B with dimethylallyl cation to yield dimethylallyl quinolone, which is subjected to FAD-dependent dehydrogenation by the FAD-linked oxidoreductase penH to yield conjugated aryl diene. The delta(3') double bond then serves as the site of the second alkylation with DMAPP catalyzed by the prenyltransferase penG to yield a carbenium ion intermediate, which can be attacked by H(2)O to yield a styrenyl quinolone containing a C3'-hydroxyprenyl chain, or undergo cyclization to yield yaequinolones J1 and J2. The conversion of the styrenyl quinolone into the tetrahydrofuran-containing yaequinolone C is performed by the FAD-dependent monooxygenase penE and involves epoxidation of the terminal C7'-C8' olefin, followed by epoxide ring opening initiated by the C3' hydroxyl group. The predicted cysteine hydrolase penJ acts as an epoxide hydrolase that enhances the rate of the 5-exo-tet cyclization step, increasing the yield of yaequinolone C. PenF catalyzes the cationic rearrangement of the epoxide formed by penE (before ring opening to produce yaequinolone C) into yaequinolone D. Finally, the short-chain dehydrogenase/reductase (SDR)-like reductase penD, catalyzes both the dehydration of yaequinolone D and the reduction of the resulting oxonium to yield penigequinolone. The polypeptide is Prenyltransferase penI (Penicillium thymicola).